A 479-amino-acid chain; its full sequence is NADH dehydrogenase [ubiquinone] flavoprotein 1, mitochondrial (479 aa).

NADH is bound at residue 103 to 112 (GRGGAGFPSG). Position 216–264 (216–264 (RGAGAYICGEETALIESIEGKQGKPRLKPPFPAMAGLYGCPTTVTNVET)) interacts with FMN. Cys396, Cys399, Cys402, and Cys442 together coordinate [4Fe-4S] cluster.

Belongs to the complex I 51 kDa subunit family. Complex I is composed of about 45 different subunits. This is a component of the flavoprotein-sulfur (FP) fragment of the enzyme. Requires FMN as cofactor. The cofactor is [4Fe-4S] cluster.

Its subcellular location is the mitochondrion inner membrane. It carries out the reaction a ubiquinone + NADH + 5 H(+)(in) = a ubiquinol + NAD(+) + 4 H(+)(out). In terms of biological role, core subunit of the mitochondrial membrane respiratory chain NADH dehydrogenase (Complex I) that is believed to belong to the minimal assembly required for catalysis. Complex I functions in the transfer of electrons from NADH to the respiratory chain. The immediate electron acceptor for the enzyme is believed to be ubiquinone. In Dictyostelium discoideum (Social amoeba), this protein is NADH dehydrogenase [ubiquinone] flavoprotein 1, mitochondrial (ndufv1).